We begin with the raw amino-acid sequence, 337 residues long: MPTIHRPRMGSLAYSPRKRAKSPVPKYHAWPAYQGEPALQGFAGYKVGMTHVIMVDDHAHSPNEGKDIMVPVTVIEVPDMRVAAIRVYRHDTYGNHVLTEVWADSFDKELSRRLNLSKNYKREEAEKKIREALEADKIVDVVALTYTRPSVLTGVPKKVPDLMETRIDGGSMTERFEYGLSMLGKDFDIRSLFKVGQYTDVTAITKGKGTQGPVKRWGVHLRKRKHSRGKKERHVGTLGPWTPHHVRWQVPMMGQMGYHQRTEFNKRLLKIGEDGAEITPEGGFINYGEVRARYVLIKGSVPGPSKRLVRIRHAMRLGEHKIREPTIGFISLESKQG.

This sequence belongs to the universal ribosomal protein uL3 family. As to quaternary structure, part of the 50S ribosomal subunit. Forms a cluster with proteins L14 and L24e.

Its function is as follows. One of the primary rRNA binding proteins, it binds directly near the 3'-end of the 23S rRNA, where it nucleates assembly of the 50S subunit. The chain is Large ribosomal subunit protein uL3 from Methanospirillum hungatei JF-1 (strain ATCC 27890 / DSM 864 / NBRC 100397 / JF-1).